The primary structure comprises 186 residues: Peptidyl-tRNA hydrolase (186 aa).

Position 14 (tyrosine 14) interacts with tRNA. The Proton acceptor role is filled by histidine 19. TRNA is bound by residues tyrosine 61, asparagine 63, and asparagine 107.

The protein belongs to the PTH family. In terms of assembly, monomer.

Its subcellular location is the cytoplasm. It carries out the reaction an N-acyl-L-alpha-aminoacyl-tRNA + H2O = an N-acyl-L-amino acid + a tRNA + H(+). Functionally, hydrolyzes ribosome-free peptidyl-tRNAs (with 1 or more amino acids incorporated), which drop off the ribosome during protein synthesis, or as a result of ribosome stalling. Catalyzes the release of premature peptidyl moieties from peptidyl-tRNA molecules trapped in stalled 50S ribosomal subunits, and thus maintains levels of free tRNAs and 50S ribosomes. This is Peptidyl-tRNA hydrolase from Helicobacter pylori (strain G27).